The chain runs to 251 residues: Hydroxyacylglutathione hydrolase (251 aa).

Zn(2+)-binding residues include H53, H55, D57, H58, H110, D127, and H165.

Belongs to the metallo-beta-lactamase superfamily. Glyoxalase II family. Monomer. Zn(2+) is required as a cofactor.

It catalyses the reaction an S-(2-hydroxyacyl)glutathione + H2O = a 2-hydroxy carboxylate + glutathione + H(+). It functions in the pathway secondary metabolite metabolism; methylglyoxal degradation; (R)-lactate from methylglyoxal: step 2/2. Its function is as follows. Thiolesterase that catalyzes the hydrolysis of S-D-lactoyl-glutathione to form glutathione and D-lactic acid. This chain is Hydroxyacylglutathione hydrolase, found in Salmonella paratyphi C (strain RKS4594).